A 561-amino-acid polypeptide reads, in one-letter code: Cytochrome P450 monooxygenase avaL (561 aa).

The helical transmembrane segment at 19–39 threads the bilayer; sequence IAASCALVCIVSACYVVWSLL. Position 508 (Cys-508) interacts with heme.

It belongs to the cytochrome P450 family. The cofactor is heme.

Its subcellular location is the membrane. It functions in the pathway secondary metabolite biosynthesis. Its function is as follows. Cytochrome P450 monooxygenase; part of the cluster that mediates the biosynthesis of a highly modified cyclo-arginine-tryptophan dipeptide (cRW). The first step of the pathway is perfornmed by the arginine-containing cyclodipeptide synthase (RCPDS) avaA that acts as the scaffold-generating enzyme and is responsible for formation of the cyclo-Arg-Trp (cRW) diketopiperazine. AvaB then acts as a multifunctional flavoenzyme that is responsible for generating the cyclo-Arg-formylkynurenine DKP, which can be deformylated by avaC. AvaB then further catalyzes an additional N-oxidation followed by cyclization and dehydration. The next step is an N-acetylation of the guanidine group catalyzed by the arginine N-acetyltransferase avaD. The roles of the additional enzymes identified within the ava cluster still have to be determined. In Aspergillus versicolor, this protein is Cytochrome P450 monooxygenase avaL.